A 210-amino-acid chain; its full sequence is High-affinity nitrate transporter 3.1 (210 aa).

A signal peptide spans 1-22 (MAIQKILFASLLICSLIQSIHG). The helical transmembrane segment at 178–198 (LDIASICFSVFSVVALVVFFV) threads the bilayer.

Belongs to the NAR2 family. In terms of assembly, heterotetramer composed of two NRT2.1 and two NRT3.1. Interacts with NRT2.1 and NRT2.3. Interacts with all other NRT2 transporters, including NRT2.5. As to expression, highly expressed in roots. Detected in shoots.

Its subcellular location is the cell membrane. In terms of biological role, acts as a dual component transporter with NTR2.1. Required for high-affinity nitrate transport. Acts as a repressor of lateral root initiation. May be involved in targeting NRT2 proteins to the plasma membrane. The protein is High-affinity nitrate transporter 3.1 (NRT3.1) of Arabidopsis thaliana (Mouse-ear cress).